The sequence spans 97 residues: Putative septation protein SpoVG (97 aa).

It belongs to the SpoVG family.

Essential for sporulation. Interferes with or is a negative regulator of the pathway leading to asymmetric septation. The protein is Putative septation protein SpoVG of Bacillus velezensis (strain DSM 23117 / BGSC 10A6 / LMG 26770 / FZB42) (Bacillus amyloliquefaciens subsp. plantarum).